We begin with the raw amino-acid sequence, 382 residues long: MDNLFTFLHEIEDRYARTIFNFHLISCDEIGDIYGLMKERISSEDMFDNVVYNKDIHPAIKKLVYCDIQLTKHIINQNTYPVFNDSSQVKCCHYFDINSDNSNISSRTVEIFEREKSSLVSYIKTTNKKRKVNYGEIKKTVHGGTNANYFSGKKSDEYLSTTVRSNINQPWIKTISKRMRVDIINHSIVTRGKSSILQTIEIIFTNRTCVKIFKDSTMHIILSKDNDEKGCIHMIDKLFYVYYNLFLLFEDIIQNEYFKEVANVVNHVLTATALDEKLFLIKKMAEHDVYGVSNFKIGMFNLTFIKSLDHTVFPSLLDEDSKIKFFKGKKLNIVALRSLEDCINYVTKSENMIEMMKERSTILNSIDIETESVDRLKDLLLK.

The protein belongs to the poxviruses A23 family. Heterodimer of a 45 kDa and a 32 kDa subunit.

In terms of biological role, acts with RNA polymerase to initiate transcription from intermediate gene promoters. The protein is Intermediate transcription factor 3 large subunit (VITF3L) of Camelus.